Reading from the N-terminus, the 147-residue chain is MTIKLHHLRPAPGAKTDKTRVGRGEGSKGKTAGRGTKGTKARKNVPAAFEGGQMPIHMRLPKLKGFTNKFRTEYQVVNVGRIAELFPQGGTVGKAELVAAGAVRKNQLVKVLGDGEIGVAVQVTADKVTGSAKEKITAAGGTVTELA.

The tract at residues 1–42 (MTIKLHHLRPAPGAKTDKTRVGRGEGSKGKTAGRGTKGTKAR) is disordered. The segment covering 15–28 (KTDKTRVGRGEGSK) has biased composition (basic and acidic residues).

Belongs to the universal ribosomal protein uL15 family. Part of the 50S ribosomal subunit.

Binds to the 23S rRNA. This Nocardia farcinica (strain IFM 10152) protein is Large ribosomal subunit protein uL15.